Reading from the N-terminus, the 110-residue chain is Large ribosomal subunit protein uL22 (110 aa).

This sequence belongs to the universal ribosomal protein uL22 family. As to quaternary structure, part of the 50S ribosomal subunit.

In terms of biological role, this protein binds specifically to 23S rRNA; its binding is stimulated by other ribosomal proteins, e.g. L4, L17, and L20. It is important during the early stages of 50S assembly. It makes multiple contacts with different domains of the 23S rRNA in the assembled 50S subunit and ribosome. Functionally, the globular domain of the protein is located near the polypeptide exit tunnel on the outside of the subunit, while an extended beta-hairpin is found that lines the wall of the exit tunnel in the center of the 70S ribosome. In Pseudomonas savastanoi pv. phaseolicola (strain 1448A / Race 6) (Pseudomonas syringae pv. phaseolicola (strain 1448A / Race 6)), this protein is Large ribosomal subunit protein uL22.